Reading from the N-terminus, the 1001-residue chain is Serine/threonine-protein kinase TAO1 (1001 aa).

Phosphoserine is present on Ser-9. Positions 28–281 (FTDLREIGHG…SEELLKHMFV (254 aa)) constitute a Protein kinase domain. ATP-binding positions include 34–42 (IGHGSFGAV) and Lys-57. The Proton acceptor role is filled by Asp-151. Disordered stretches follow at residues 324-380 (PAVE…DKSE) and 404-431 (ENYQ…HKSH). The span at 350–370 (SNQSIPSMSISASSQSSSVNS) shows a compositional bias: low complexity. Residues Ser-421 and Ser-445 each carry the phosphoserine modification. Positions 458-651 (SELREQMSGY…QTQKDLEHAM (194 aa)) form a coiled coil. Residues 567-587 (KEELNENQSTPKKEKQEWLSK) are disordered. Residues 577-587 (PKKEKQEWLSK) show a composition bias toward basic and acidic residues. Thr-669 is subject to Phosphothreonine. A coiled-coil region spans residues 754–877 (KAVLKRLKEE…LERQAREIEA (124 aa)). The disordered stretch occupies residues 905–1001 (PGASSWSHNP…ISNGSHMSYT (97 aa)). Polar residues predominate over residues 906-915 (GASSWSHNPT). The residue at position 965 (Ser-965) is a Phosphoserine. A compositionally biased stretch (polar residues) spans 975–1001 (GGRTEQGMSRSTSVTSQISNGSHMSYT).

This sequence belongs to the protein kinase superfamily. STE Ser/Thr protein kinase family. STE20 subfamily. As to quaternary structure, self-associates. Interacts with MAP2K3. Interacts with SPRED1. Interacts with TESK1; the interaction inhibits TAOK1 kinase activity. Interacts with MAP3K7. Post-translationally, proteolytically processed by caspase-3 (CASP3). Autophosphorylated. Phosphorylated by ATM in response to DNA damage. Phosphorylated by LRRK2.

Its subcellular location is the cytoplasm. The enzyme catalyses L-seryl-[protein] + ATP = O-phospho-L-seryl-[protein] + ADP + H(+). It carries out the reaction L-threonyl-[protein] + ATP = O-phospho-L-threonyl-[protein] + ADP + H(+). Serine/threonine-protein kinase activity is inhibited by SPRED1. Serine/threonine-protein kinase involved in various processes such as p38/MAPK14 stress-activated MAPK cascade, DNA damage response and regulation of cytoskeleton stability. Phosphorylates MAP2K3, MAP2K6 and MARK2. Acts as an activator of the p38/MAPK14 stress-activated MAPK cascade by mediating phosphorylation and subsequent activation of the upstream MAP2K3 and MAP2K6 kinases. Involved in G-protein coupled receptor signaling to p38/MAPK14. In response to DNA damage, involved in the G2/M transition DNA damage checkpoint by activating the p38/MAPK14 stress-activated MAPK cascade, probably by mediating phosphorylation of MAP2K3 and MAP2K6. Acts as a regulator of cytoskeleton stability by phosphorylating 'Thr-208' of MARK2, leading to activate MARK2 kinase activity and subsequent phosphorylation and detachment of MAPT/TAU from microtubules. Also acts as a regulator of apoptosis: regulates apoptotic morphological changes, including cell contraction, membrane blebbing and apoptotic bodies formation via activation of the MAPK8/JNK cascade. During fetal development, it plays an essential role in the regulation of neuronal differentiation and migration to the cortical plate. The polypeptide is Serine/threonine-protein kinase TAO1 (Taok1) (Rattus norvegicus (Rat)).